The sequence spans 3354 residues: Cadherin-23 (3354 aa).

Residues 1–23 form the signal peptide; it reads MGRHVATSCHVAWLLVLISGCWG. The Extracellular segment spans residues 24–3064; the sequence is QVNRLPFFTN…SVRLPDDMSA (3041 aa). 27 Cadherin domains span residues 34–132, 133–236, 237–348, 349–460, 461–561, 562–671, 672–784, 779–890, 891–995, 996–1102, 1103–1208, 1210–1313, 1314–1418, 1420–1527, 1529–1634, 1635–1744, 1745–1851, 1852–1959, 1960–2069, 2070–2174, 2175–2293, 2297–2402, 2403–2509, 2510–2611, 2614–2722, 2729–2846, and 2847–2975; these read HFFD…APTF, HNQP…DPIF, INLP…APEF, NSSE…RPIF, SQPL…VPTF, QKDA…PPTF, SKPA…APYY, KDAP…DPTF, QNLP…TPTF, FPAV…RPIF, LQSS…APVF, QQQY…AVQF, SNAS…SPRF, FTSD…PPVI, SPFG…APMF, QQPH…VPTF, PRDY…DPVL, LNLP…HPLF, TKST…RPTF, SPAT…RPEF, LNPI…TPQF, GITY…NPIF, DQPS…RPQF, SKPQ…RPVF, PPNG…EPLF, SPQY…PPRF, and TKAE…EEEF. Residues Asn155 and Asn206 are each glycosylated (N-linked (GlcNAc...) asparagine). 32 N-linked (GlcNAc...) asparagine glycosylation sites follow: Asn349, Asn393, Asn434, Asn466, Asn472, Asn652, Asn694, Asn765, Asn810, Asn827, Asn941, Asn1001, Asn1018, Asn1171, Asn1282, Asn1315, Asn1473, Asn1534, Asn1651, Asn1667, Asn1818, Asn1857, Asn1889, Asn1902, Asn2013, Asn2050, Asn2129, Asn2168, Asn2195, Asn2263, Asn2357, and Asn2369. Residues Asn2616, Asn2749, Asn2808, Asn2877, Asn2896, Asn2941, and Asn2981 are each glycosylated (N-linked (GlcNAc...) asparagine). Residues 3065-3085 form a helical membrane-spanning segment; sequence LQMAIIVLAILLFLAAMLFVL. Residues 3086–3354 lie on the Cytoplasmic side of the membrane; that stretch reads MNWYYRTVHK…METPLEITEL (269 aa).

As to quaternary structure, antiparallel heterodimer with PCDH15. Interacts with USH1C and USH1G. As to expression, particularly strong expression in the retina. Found also in the cochlea.

It localises to the cell membrane. In terms of biological role, cadherins are calcium-dependent cell adhesion proteins. They preferentially interact with themselves in a homophilic manner in connecting cells. CDH23 is required for establishing and/or maintaining the proper organization of the stereocilia bundle of hair cells in the cochlea and the vestibule during late embryonic/early postnatal development. It is part of the functional network formed by USH1C, USH1G, CDH23 and MYO7A that mediates mechanotransduction in cochlear hair cells. Required for normal hearing. In Homo sapiens (Human), this protein is Cadherin-23.